Reading from the N-terminus, the 238-residue chain is 2,3-bisphosphoglycerate-dependent phosphoglycerate mutase (238 aa).

Substrate contacts are provided by residues 8–15 (RHGQSEWN), 21–22 (TG), R60, 86–89 (ERHY), K97, 113–114 (RR), and 182–183 (GN). The Tele-phosphohistidine intermediate role is filled by H9. E86 serves as the catalytic Proton donor/acceptor.

It belongs to the phosphoglycerate mutase family. BPG-dependent PGAM subfamily. In terms of assembly, homodimer.

It carries out the reaction (2R)-2-phosphoglycerate = (2R)-3-phosphoglycerate. It functions in the pathway carbohydrate degradation; glycolysis; pyruvate from D-glyceraldehyde 3-phosphate: step 3/5. Functionally, catalyzes the interconversion of 2-phosphoglycerate and 3-phosphoglycerate. This Pelagibacter ubique (strain HTCC1062) protein is 2,3-bisphosphoglycerate-dependent phosphoglycerate mutase.